Reading from the N-terminus, the 322-residue chain is Eukaryotic translation initiation factor 3 subunit I (322 aa).

WD repeat units follow at residues 4–43 (GHERSITQIKYNREGDLLFSCSKDQKPNVWYSLNGERLGT), 46–85 (GHQGAVWCLDVDWETRKLITGAGDMTTKIWDVEYGTVIAS), 141–180 (MVESKITSMLWGPLDETIITGHDNGNIAIWDIRKGQKVVD), 184–223 (DHTAGINDMQLSKDGTMFVTASKDTTAKLFDSESLMCLKT), and 281–322 (GHFG…NIFE).

It belongs to the eIF-3 subunit I family. In terms of assembly, component of the eukaryotic translation initiation factor 3 (eIF-3) complex. The eIF-3 complex interacts with pix.

The protein localises to the cytoplasm. Its function is as follows. Component of the eukaryotic translation initiation factor 3 (eIF-3) complex, which is involved in protein synthesis of a specialized repertoire of mRNAs and, together with other initiation factors, stimulates binding of mRNA and methionyl-tRNAi to the 40S ribosome. The eIF-3 complex specifically targets and initiates translation of a subset of mRNAs involved in cell proliferation. This is Eukaryotic translation initiation factor 3 subunit I from Drosophila mojavensis (Fruit fly).